Here is a 285-residue protein sequence, read N- to C-terminus: Mediator of RNA polymerase II transcription subunit 4 (285 aa).

A compositionally biased stretch (low complexity) spans 1–13 (MSTPGPVPSSTSV). A disordered region spans residues 1–25 (MSTPGPVPSSTSVATLPFSAQDKTQ). A coiled-coil region spans residues 31-115 (ELQSVGIYQD…TREILETLNT (85 aa)). Residues 206–285 (DNVNNDNNTS…DLDLFNPDEF (80 aa)) are disordered. Composition is skewed to basic and acidic residues over residues 216–250 (KIDE…RRGS) and 257–267 (GKEDSETKSEE). Residues 268 to 285 (NPDLELDLDLDLFNPDEF) are compositionally biased toward acidic residues.

It belongs to the Mediator complex subunit 4 family. As to quaternary structure, component of the Mediator complex.

The protein resides in the nucleus. In terms of biological role, component of the Mediator complex, a coactivator involved in the regulated transcription of nearly all RNA polymerase II-dependent genes. Mediator functions as a bridge to convey information from gene-specific regulatory proteins to the basal RNA polymerase II transcription machinery. Mediator is recruited to promoters by direct interactions with regulatory proteins and serves as a scaffold for the assembly of a functional preinitiation complex with RNA polymerase II and the general transcription factors. The polypeptide is Mediator of RNA polymerase II transcription subunit 4 (MED4) (Kluyveromyces lactis (strain ATCC 8585 / CBS 2359 / DSM 70799 / NBRC 1267 / NRRL Y-1140 / WM37) (Yeast)).